Reading from the N-terminus, the 274-residue chain is 3-methyl-2-oxobutanoate hydroxymethyltransferase (274 aa).

Residues Asp-44 and Asp-83 each coordinate Mg(2+). 3-methyl-2-oxobutanoate contacts are provided by residues 44 to 45 (DS), Asp-83, and Lys-113. Residue Glu-115 coordinates Mg(2+). The active-site Proton acceptor is the Glu-182.

This sequence belongs to the PanB family. As to quaternary structure, homodecamer; pentamer of dimers. Mg(2+) serves as cofactor.

The protein resides in the cytoplasm. The enzyme catalyses 3-methyl-2-oxobutanoate + (6R)-5,10-methylene-5,6,7,8-tetrahydrofolate + H2O = 2-dehydropantoate + (6S)-5,6,7,8-tetrahydrofolate. It participates in cofactor biosynthesis; (R)-pantothenate biosynthesis; (R)-pantoate from 3-methyl-2-oxobutanoate: step 1/2. In terms of biological role, catalyzes the reversible reaction in which hydroxymethyl group from 5,10-methylenetetrahydrofolate is transferred onto alpha-ketoisovalerate to form ketopantoate. The sequence is that of 3-methyl-2-oxobutanoate hydroxymethyltransferase from Campylobacter jejuni (strain RM1221).